The following is a 384-amino-acid chain: Branched-chain-amino-acid aminotransferase 1, mitochondrial (384 aa).

A mitochondrion-targeting transit peptide spans 1 to 18; sequence MALRRCLPQYSTTSSYLS. The residue at position 231 (K231) is an N6-(pyridoxal phosphate)lysine.

This sequence belongs to the class-IV pyridoxal-phosphate-dependent aminotransferase family. The cofactor is pyridoxal 5'-phosphate.

Its subcellular location is the mitochondrion. It carries out the reaction L-leucine + 2-oxoglutarate = 4-methyl-2-oxopentanoate + L-glutamate. The enzyme catalyses L-isoleucine + 2-oxoglutarate = (S)-3-methyl-2-oxopentanoate + L-glutamate. The catalysed reaction is L-valine + 2-oxoglutarate = 3-methyl-2-oxobutanoate + L-glutamate. It functions in the pathway amino-acid degradation; L-leucine degradation; 4-methyl-2-oxopentanoate from L-leucine (aminotransferase route): step 1/1. The protein operates within amino-acid degradation; L-valine degradation. Its function is as follows. Converts 2-oxo acids to branched-chain amino acids. Acts on leucine, isoleucine and valine. This Arabidopsis thaliana (Mouse-ear cress) protein is Branched-chain-amino-acid aminotransferase 1, mitochondrial (BCAT1).